The following is a 559-amino-acid chain: DNA ligase (559 aa).

ATP is bound at residue E247. The active-site N6-AMP-lysine intermediate is K249. ATP is bound by residues R254, R269, E299, F339, R414, and K420.

It belongs to the ATP-dependent DNA ligase family. It depends on Mg(2+) as a cofactor.

The catalysed reaction is ATP + (deoxyribonucleotide)n-3'-hydroxyl + 5'-phospho-(deoxyribonucleotide)m = (deoxyribonucleotide)n+m + AMP + diphosphate.. It catalyses the reaction NAD(+) + (deoxyribonucleotide)n-3'-hydroxyl + 5'-phospho-(deoxyribonucleotide)m = (deoxyribonucleotide)n+m + AMP + beta-nicotinamide D-nucleotide.. Functionally, DNA ligase that seals nicks in double-stranded DNA during DNA replication, DNA recombination and DNA repair. Shows high activity with either ATP or NAD(+). The protein is DNA ligase of Thermococcus fumicolans.